The following is a 120-amino-acid chain: Large ribosomal subunit protein uL22 (120 aa).

This sequence belongs to the universal ribosomal protein uL22 family. In terms of assembly, part of the 50S ribosomal subunit.

In terms of biological role, this protein binds specifically to 23S rRNA; its binding is stimulated by other ribosomal proteins, e.g. L4, L17, and L20. It is important during the early stages of 50S assembly. It makes multiple contacts with different domains of the 23S rRNA in the assembled 50S subunit and ribosome. Its function is as follows. The globular domain of the protein is located near the polypeptide exit tunnel on the outside of the subunit, while an extended beta-hairpin is found that lines the wall of the exit tunnel in the center of the 70S ribosome. This is Large ribosomal subunit protein uL22 from Corynebacterium efficiens (strain DSM 44549 / YS-314 / AJ 12310 / JCM 11189 / NBRC 100395).